A 220-amino-acid chain; its full sequence is ATP-dependent dethiobiotin synthetase BioD (220 aa).

Aspartate 12 to isoleucine 17 is a binding site for ATP. A Mg(2+)-binding site is contributed by threonine 16. Lysine 37 is a catalytic residue. Threonine 41 lines the substrate pocket. Residues aspartate 49, glutamate 107 to glycine 110, glycine 167 to serine 168, and proline 197 to glycine 199 contribute to the ATP site. Residues aspartate 49 and glutamate 107 each coordinate Mg(2+).

The protein belongs to the dethiobiotin synthetase family. Homodimer. Mg(2+) serves as cofactor.

It localises to the cytoplasm. The catalysed reaction is (7R,8S)-7,8-diammoniononanoate + CO2 + ATP = (4R,5S)-dethiobiotin + ADP + phosphate + 3 H(+). The protein operates within cofactor biosynthesis; biotin biosynthesis; biotin from 7,8-diaminononanoate: step 1/2. In terms of biological role, catalyzes a mechanistically unusual reaction, the ATP-dependent insertion of CO2 between the N7 and N8 nitrogen atoms of 7,8-diaminopelargonic acid (DAPA, also called 7,8-diammoniononanoate) to form a ureido ring. This Corynebacterium efficiens (strain DSM 44549 / YS-314 / AJ 12310 / JCM 11189 / NBRC 100395) protein is ATP-dependent dethiobiotin synthetase BioD.